Consider the following 359-residue polypeptide: Transcription elongation factor A N-terminal and central domain-containing protein (359 aa).

Residues 1–82 (MSDKNQIIAR…AKWRGFYKST (82 aa)) enclose the TFIIS N-terminal domain. A disordered region spans residues 84–118 (CKPRQSPKVLHTNANKEESAAVSQDVSQDETSGSS). Residues 104–118 (AVSQDVSQDETSGSS) show a composition bias toward polar residues. Positions 182–298 (VRSKCVELLY…EHCLPQSVDG (117 aa)) constitute a TFIIS central domain.

This Mus musculus (Mouse) protein is Transcription elongation factor A N-terminal and central domain-containing protein (Tceanc).